Consider the following 96-residue polypeptide: (4S)-4-hydroxy-5-phosphonooxypentane-2,3-dione isomerase (96 aa).

An ABM domain is found at 2-91; it reads HVTLVEINVH…MTGPRTKKVF (90 aa).

The protein belongs to the LsrG family. As to quaternary structure, homodimer.

Its subcellular location is the cytoplasm. The enzyme catalyses (2S)-2-hydroxy-3,4-dioxopentyl phosphate = 3-hydroxy-2,4-dioxopentyl phosphate. In terms of biological role, involved in the degradation of phospho-AI-2, thereby terminating induction of the lsr operon and closing the AI-2 signaling cycle. Catalyzes the conversion of (4S)-4-hydroxy-5-phosphonooxypentane-2,3-dione (P-DPD) to 3-hydroxy-5-phosphonooxypentane-2,4-dione (P-HPD). This Salmonella choleraesuis (strain SC-B67) protein is (4S)-4-hydroxy-5-phosphonooxypentane-2,3-dione isomerase.